The primary structure comprises 331 residues: MDNLGHRENGRQRPDQYKGLHTQWMMPQTQRHLKDHQSMNLLALMNDRDNAIRERDHALAEKKAAIAERDMAFTQRDAAMAERNAAVVERDNALAALELARTNGLNMNNGNGFPQGSLSGSKNIHHHDQLSHAQSSPLQLADSPYDHAREMHISEAYPISTAPGSAGKAKRPKKNSSQASPLKRPSGVLRKTKKPSGDWKNVGMSGCGDDSAHASVMKNEWKDQNLGLNQVAFDDSTMPAPACSCTGKLRQCYKWGNGGWQSSCCTMNISMYPLPVMPNKRHARMGGRKMSGGAFTKLLSRLAAEGHDLSTPVDLKDHWAKHGTNRYITIR.

Residues 43–101 (ALMNDRDNAIRERDHALAEKKAAIAERDMAFTQRDAAMAERNAAVVERDNALAALELAR) adopt a coiled-coil conformation. The tract at residues 51–86 (AIRERDHALAEKKAAIAERDMAFTQRDAAMAERNAA) is alanine-zipper. Polar residues predominate over residues 104–122 (GLNMNNGNGFPQGSLSGSK). Disordered stretches follow at residues 104–140 (GLNM…PLQL) and 156–205 (AYPI…VGMS).

This sequence belongs to the BBR/BPC family. In terms of assembly, homodimer. Heterodimer.

Its subcellular location is the nucleus. Functionally, transcriptional regulator that specifically binds to GA-rich elements (GAGA-repeats) present in regulatory sequences of genes involved in developmental processes. The chain is Barley B recombinant-like protein D from Oryza sativa subsp. japonica (Rice).